The primary structure comprises 71 residues: Cell division protein ZapB (71 aa).

A coiled-coil region spans residues 5–67 (LEVLEQLESK…RALLGKMEQM (63 aa)).

This sequence belongs to the ZapB family. In terms of assembly, homodimer. The ends of the coiled-coil dimer bind to each other, forming polymers. Interacts with FtsZ.

The protein resides in the cytoplasm. Non-essential, abundant cell division factor that is required for proper Z-ring formation. It is recruited early to the divisome by direct interaction with FtsZ, stimulating Z-ring assembly and thereby promoting cell division earlier in the cell cycle. Its recruitment to the Z-ring requires functional FtsA or ZipA. The chain is Cell division protein ZapB from Aeromonas salmonicida (strain A449).